We begin with the raw amino-acid sequence, 132 residues long: Small ribosomal subunit protein uS8 (132 aa).

It belongs to the universal ribosomal protein uS8 family. In terms of assembly, part of the 30S ribosomal subunit. Contacts proteins S5 and S12.

Its function is as follows. One of the primary rRNA binding proteins, it binds directly to 16S rRNA central domain where it helps coordinate assembly of the platform of the 30S subunit. This chain is Small ribosomal subunit protein uS8, found in Rickettsia typhi (strain ATCC VR-144 / Wilmington).